The following is a 187-amino-acid chain: Putative zinc finger protein 833 (187 aa).

6 consecutive C2H2-type zinc fingers follow at residues 10 to 32 (YKCKFCGKAFDNLHLYLTHERTH), 38 to 60 (YECNKCGKAFSCSSSIRKHARIH), 66 to 88 (YICKQCGKAFRYSSSIRNHENTH), 94 to 116 (CECKQCGKAFSYSSYFRIHERIH), 122 to 144 (YKCKECGKTFTYPSAFHKHKSTH), and 150 to 172 (YECKECGKAFDCFSSFHSHEGVH).

In Homo sapiens (Human), this protein is Putative zinc finger protein 833 (ZNF833P).